A 164-amino-acid polypeptide reads, in one-letter code: Phosphopantetheine adenylyltransferase (164 aa).

Substrate is bound at residue serine 9. Residues 9-10 and histidine 17 each bind ATP; that span reads SF. Substrate is bound by residues lysine 41, leucine 73, and lysine 87. Residues 88–90, glutamate 98, and 123–129 contribute to the ATP site; these read GLR and NSFLSSS.

The protein belongs to the bacterial CoaD family. Homohexamer. Requires Mg(2+) as cofactor.

The protein localises to the cytoplasm. It catalyses the reaction (R)-4'-phosphopantetheine + ATP + H(+) = 3'-dephospho-CoA + diphosphate. The protein operates within cofactor biosynthesis; coenzyme A biosynthesis; CoA from (R)-pantothenate: step 4/5. In terms of biological role, reversibly transfers an adenylyl group from ATP to 4'-phosphopantetheine, yielding dephospho-CoA (dPCoA) and pyrophosphate. The polypeptide is Phosphopantetheine adenylyltransferase (Clostridium kluyveri (strain ATCC 8527 / DSM 555 / NBRC 12016 / NCIMB 10680 / K1)).